Here is a 612-residue protein sequence, read N- to C-terminus: Elongation factor 4 (612 aa).

The region spanning 11–193 (KHIRNFAIVA…KVVKDIPAPS (183 aa)) is the tr-type G domain. Residues 23-28 (DHGKST) and 140-143 (NKID) contribute to the GTP site.

It belongs to the TRAFAC class translation factor GTPase superfamily. Classic translation factor GTPase family. LepA subfamily.

It is found in the cell membrane. The catalysed reaction is GTP + H2O = GDP + phosphate + H(+). Its function is as follows. Required for accurate and efficient protein synthesis under certain stress conditions. May act as a fidelity factor of the translation reaction, by catalyzing a one-codon backward translocation of tRNAs on improperly translocated ribosomes. Back-translocation proceeds from a post-translocation (POST) complex to a pre-translocation (PRE) complex, thus giving elongation factor G a second chance to translocate the tRNAs correctly. Binds to ribosomes in a GTP-dependent manner. This is Elongation factor 4 from Lactobacillus helveticus (strain DPC 4571).